The chain runs to 276 residues: Glutathione S-transferase-like protein ustS (276 aa).

Positions 16–109 (STLPGTSKSW…HLDETYPDPP (94 aa)) constitute a GST N-terminal domain.

This sequence belongs to the GST superfamily.

It functions in the pathway mycotoxin biosynthesis. Functionally, glutathione S-transferase-like protein; part of the gene cluster that mediates the biosynthesis of the secondary metabolite ustiloxin B, an antimitotic tetrapeptide. First, ustA is processed by the subtilisin-like endoprotease Kex2 that is outside the ustiloxin B gene cluster, at the C-terminal side of Arg-Lys, after transfer to Golgi apparatus through the endoplasmic reticulum (ER). Cleavage by KEX2 generates 16 peptides YAIG-I to YAIG-XVI. To process the precursor peptide further, at least two peptidases are necessary to cleave the N-terminal and C-terminal sides of the Tyr-Ala-Ile-Gly core peptide which serves as backbone for the synthesis of ustiloxin B, through cyclization and modification of the tyrosine with a non-protein coding amino acid, norvaline. One of the two peptidases must be the serine peptidase ustP; and the other pepdidase is probably ustH. Macrocyclization of the core peptide derived from ustA requires the tyrosinase ustQ, as well as the homologous oxidases ustYa and ustYb, and leads to the production of the first cyclization product N-desmethylustiloxin F. For the formation of N-desmethylustiloxin F, three oxidation steps are required, hydroxylation at the benzylic position, hydroxylation at either the aromatic ring of Tyr or beta-position of Ile, and oxidative cyclization. UstQ may catalyze the oxidation of a phenol moiety, whereas the ustYa and ustYb are most likely responsible for the remaining two-step oxidations. N-desmethylustiloxin F is then methylated by ustM to yield ustiloxin F which in turn substrate of the cytochrome P450 monooxygenase ustC which catalyzes the formation of S-deoxyustiloxin H. The flavoprotein monooxygenases ustF1 and ustF2 then participate in the modification of the side chain of S-deoxyustiloxin H, leading to the synthesis of an oxime intermediate, via ustiloxin H. Finally, carboxylative dehydration performed by the cysteine desulfurase-like protein ustD yields ustiloxin B. This chain is Glutathione S-transferase-like protein ustS, found in Aspergillus flavus (strain ATCC 200026 / FGSC A1120 / IAM 13836 / NRRL 3357 / JCM 12722 / SRRC 167).